The chain runs to 301 residues: NTE family protein RssA (301 aa).

The 161-residue stretch at 8-168 (LALGSGAARG…VNPIPISLTR (161 aa)) folds into the PNPLA domain. The short motif at 39 to 43 (GCSIG) is the GXSXG element. S41 (nucleophile) is an active-site residue. Catalysis depends on D155, which acts as the Proton acceptor. Residues 155-157 (DGA) carry the DGA/G motif.

The protein belongs to the NTE family.

This Escherichia coli (strain K12) protein is NTE family protein RssA (rssA).